The following is a 303-amino-acid chain: Probable acetylxylan esterase A (303 aa).

The first 23 residues, 1–23 (MLSTHLLFLATTLLTSLFHPIAA), serve as a signal peptide directing secretion. The active-site Charge relay system is serine 147. N-linked (GlcNAc...) asparagine glycosylation occurs at asparagine 189.

It belongs to the carbohydrate esterase 1 (CE1) family. AxeA subfamily. In terms of assembly, monomer.

The protein resides in the secreted. The catalysed reaction is Deacetylation of xylans and xylo-oligosaccharides.. It functions in the pathway glycan degradation; xylan degradation. Acetylxylan esterase involved in the hydrolysis of xylan, a major structural heterogeneous polysaccharide found in plant biomass representing the second most abundant polysaccharide in the biosphere, after cellulose. Degrades acetylated xylans by cleaving acetyl side groups from the hetero-xylan backbone. This Aspergillus niger (strain ATCC MYA-4892 / CBS 513.88 / FGSC A1513) protein is Probable acetylxylan esterase A (axeA).